The chain runs to 650 residues: Histone-lysine N-methyltransferase family member SUVH9 (650 aa).

Disordered regions lie at residues 1–24 (MGSS…KLEP) and 95–129 (PVEE…RSSE). Low complexity predominate over residues 7 to 20 (PLDPSLNPSPSLIP). Positions 107 to 118 (YSTSDSSPSVAT) are enriched in polar residues. In terms of domain architecture, YDG spans 205-352 (GSIPGVQVGD…FGVFKYRLER (148 aa)). Residues 432-490 (SGCDCVNGCGSGCLCEAKNSGEIAYDYNGTLIRQKPLIHECGSACQCPPSCRNRVTQKG) enclose the Pre-SET domain. Zn(2+) contacts are provided by C434, C436, C440, C444, C446, C472, C476, C478, and C482. An SET domain is found at 493 to 637 (NRLEVFRSLE…PMTELSLDYG (145 aa)).

Belongs to the class V-like SAM-binding methyltransferase superfamily. Histone-lysine methyltransferase family. Suvar3-9 subfamily. In terms of assembly, component of an RNA-directed DNA methylation (RdDM) complex that contains at least MORC6, MORC1/CRT1, MORC2, SWI3D and SUVH9. Interacts directly with MORC6, MORC2 and MORC1/CRT1. Interacts with SWI3B, SWI3C and SWI3D.

The protein localises to the nucleus. It is found in the chromosome. The protein resides in the centromere. In terms of biological role, histone methyltransferase family member that plays a role in gene silencing. Together with MORC6 and SUVH2, regulates the silencing of some transposable elements (TEs). According to PubMed:19043555, the protein does not bind S-adenosyl-L-methionine and lacks methyltransferase activity. Instead, it may function downstream of DRM2 in RNA-directed DNA methylation, binding to methylated DNA and recruiting DNA-directed RNA polymerase V to chromatin. The protein is Histone-lysine N-methyltransferase family member SUVH9 (SUVH9) of Arabidopsis thaliana (Mouse-ear cress).